We begin with the raw amino-acid sequence, 1478 residues long: Adhesion G protein-coupled receptor L2 (1478 aa).

Residues 1-25 (MVSSGCRMRSLWFIIIISFLPNTEG) form the signal peptide. Residues 26–855 (FSRAALPFGL…VHELLLTVIT (830 aa)) lie on the Extracellular side of the membrane. An SUEL-type lectin domain is found at 41-130 (SCEGYSIDLR…KYLEVQYECV (90 aa)). An N-linked (GlcNAc...) asparagine glycan is attached at Asn-99. An Olfactomedin-like domain is found at 139 to 398 (VCPGTLKAIV…ILRYSLEFGP (260 aa)). A disulfide bond links Cys-140 and Cys-322. A glycan (N-linked (GlcNAc...) asparagine) is linked at Asn-335. Positions 422 to 458 (VSTTSTTSQKGPMSTTVAGSQEGSKGTKAPPAVSTTK) are disordered. Polar residues predominate over residues 430–445 (QKGPMSTTVAGSQEGS). 7 N-linked (GlcNAc...) asparagine glycosylation sites follow: Asn-524, Asn-633, Asn-735, Asn-748, Asn-791, Asn-796, and Asn-817. Residues 663-841 (TRVSMPTENI…AILMAHREIA (179 aa)) enclose the GAIN-B domain. Disulfide bonds link Cys-792–Cys-823 and Cys-811–Cys-825. Residues 792-841 (CSFWNYSERTMMGYWSTQGCKLVDTNKTRTTCACSHLTNFAILMAHREIA) form a GPS region. The helical transmembrane segment at 856–876 (WVGIVISLVCLAICIFTFCFF) threads the bilayer. Residues 877-884 (RGLQSDRN) are Cytoplasmic-facing. A helical transmembrane segment spans residues 885–905 (TIHKNLCINLFIAEFIFLIGI). Residues 906 to 911 (DKTKYM) lie on the Extracellular side of the membrane. The helical transmembrane segment at 912–932 (IACPIFAGLLHFFFLAAFAWM) threads the bilayer. Residues 933–955 (CLEGVQLYLMLVEVFESEYSRKK) lie on the Cytoplasmic side of the membrane. The chain crosses the membrane as a helical span at residues 956–976 (YYYVAGYLFPATVVGVSAAID). Topologically, residues 977–994 (YKSYGTEKACWLHVDNYF) are extracellular. Residues 995-1015 (IWSFIGPVTFIILLNIIFLVI) traverse the membrane as a helical segment. At 1016 to 1056 (TLCKMVKHSNTLKPDSSRLENINNYRVCDGYYNTDLPGSWV) the chain is on the cytoplasmic side. Residues 1057–1077 (LGAFALLCLLGLTWSFGLLFI) form a helical membrane-spanning segment. Residues 1078-1081 (NEET) lie on the Extracellular side of the membrane. A helical transmembrane segment spans residues 1082–1102 (IVMAYLFTIFNAFQGVFIFIF). Topologically, residues 1103 to 1478 (HCALQKKVRK…EGQMQLVTSL (376 aa)) are cytoplasmic. The disordered stretch occupies residues 1378-1419 (AEDHLQSPNRDSLYTSMPNLRDSPYQESSPDMEEDLSPSRRS). Residues 1383–1395 (QSPNRDSLYTSMP) show a composition bias toward polar residues. A phosphoserine mark is found at Ser-1393, Ser-1428, and Ser-1449.

It belongs to the G-protein coupled receptor 2 family. Adhesion G-protein coupled receptor (ADGR) subfamily. As to quaternary structure, heterodimer of 2 chains generated by proteolytic processing; the large extracellular N-terminal fragment and the membrane-bound C-terminal fragment predominantly remain associated and non-covalently linked. Post-translationally, autoproteolytically processed at the GPS region of the GAIN-B domain; this cleavage modulates receptor activity. In terms of tissue distribution, ubiquitously expressed.

It localises to the postsynaptic cell membrane. Forms a heterodimer of 2 chains generated by proteolytic processing that remain associated through non-covalent interactions mediated by the GAIN-B domain. In the inactivated receptor, the Stachel sequence (also named stalk) is embedded in the GAIN-B domain, where it adopts a beta-strand conformation. On activation, the Stachel moves into the 7 transmembrane region and adopts a twisted hook-shaped configuration that forms contacts within the receptor, leading to coupling of a G-alpha protein, which activates signaling. The cleaved GAIN-B and N-terminal domains can then dissociate from the rest of the receptor. Its function is as follows. Orphan adhesion G-protein coupled receptor (aGPCR), which mediates synapse specificity. Ligand binding causes a conformation change that triggers signaling via guanine nucleotide-binding proteins (G proteins) and modulates the activity of downstream effectors. Following G-protein coupled receptor activation, associates with cell adhesion molecules that are expressed at the surface of adjacent cells to direct synapse specificity. Specifically mediates the establishment of perforant-path synapses on CA1-region pyramidal neurons in the hippocampus. Localizes to postsynaptic spines in excitatory synapses in the S.lacunosum-moleculare and interacts with presynaptic cell adhesion molecules, such as teneurins, promoting synapse formation. The chain is Adhesion G protein-coupled receptor L2 (ADGRL2) from Bos taurus (Bovine).